Here is a 112-residue protein sequence, read N- to C-terminus: Glutaredoxin-C6 (112 aa).

A Glutaredoxin domain is found at 3-103 (LAKAKETVAS…PLLTEAGAIA (101 aa)). Residues Cys23 and Cys26 are joined by a disulfide bond.

Belongs to the glutaredoxin family. CPYC subfamily. Post-translationally, the N-terminus is blocked. As to expression, expressed in aleurone layer.

It is found in the cytoplasm. In terms of biological role, has a glutathione-disulfide oxidoreductase activity in the presence of NADPH and glutathione reductase. Reduces low molecular weight disulfides and proteins. Possesses thioltransferase, dehydroascorbate reductase and GSH-dependent peroxidase activities in vitro. The protein is Glutaredoxin-C6 (GRXC6) of Oryza sativa subsp. japonica (Rice).